The chain runs to 158 residues: uncharacterized protein (158 aa).

The 128-residue stretch at 3-130 folds into the Nudix hydrolase domain; it reads YLQRVTNCVL…DGHILDFMMK (128 aa). The Nudix box motif lies at 34–55; that stretch reads GKMESGESVRDSVIREYREETG. Glutamate 49 and glutamate 53 together coordinate Mg(2+).

The protein belongs to the Nudix hydrolase family. It depends on Mg(2+) as a cofactor.

This is an uncharacterized protein from Bacillus subtilis (strain 168).